The following is a 370-amino-acid chain: Sphingosine 1-phosphate receptor 2 (370 aa).

Over 1–57 (MTTCRLFAGFCQAVTMSKYSQYFNKTLIQVHYLTAKEMTAEELRDRIESKQSLSSLN) the chain is Extracellular. The N-linked (GlcNAc...) asparagine glycan is linked to N24. Residues 58–78 (ILFVVICSIIILENLLVLIAV) traverse the membrane as a helical segment. Residues 79 to 87 (FRNKKFHSA) lie on the Cytoplasmic side of the membrane. Residues 88-108 (MFFFIGNLAFSDLLAGSAYIA) traverse the membrane as a helical segment. The Extracellular portion of the chain corresponds to 109-128 (NIFLSGPRTFHLTPVQWFIR). The helical transmembrane segment at 129–149 (EGTAFIALSASVFSLLAIAIE) threads the bilayer. Over 150–167 (RYIAITKVKVYGSNKTCR) the chain is Cytoplasmic. A helical membrane pass occupies residues 168–193 (MFLLIGACWVMSILLGGLPIIGWNCI). Over 194-219 (NNLDDCSAVLPLNTRYYIRFVVTIFS) the chain is Extracellular. A helical transmembrane segment spans residues 220–230 (IILLSIVILYV). The Cytoplasmic portion of the chain corresponds to 231-254 (RIYLIVRTSHQEATNSPAYALLKT). The chain crosses the membrane as a helical span at residues 255-275 (VTIVLGVFIICWLPAFTILLL). The Extracellular segment spans residues 276-289 (DTSCKMKQCPILNN). The helical transmembrane segment at 290-310 (AGIFFSFATLNSALNPLIYTL) threads the bilayer. Residues 311–370 (RSKDMRKEFLRVLCCWGLLNCGRPPHRCMVPLKSSSSMEHCTNKHEHQSIPIMQDCTTCV) lie on the Cytoplasmic side of the membrane. Residue C325 is the site of S-palmitoyl cysteine attachment.

The protein belongs to the G-protein coupled receptor 1 family.

Its subcellular location is the cell membrane. Its function is as follows. Receptor for the lysosphingolipid sphingosine 1-phosphate (S1P). S1P receptor is critical for cell migration and epithelial integrity during vertebrate embryogenesis. Receptor for the chemokine-like protein FAM19A5. Mediates the inhibitory effect of FAM19A5 on vascular smooth muscle cell proliferation and migration. The sequence is that of Sphingosine 1-phosphate receptor 2 (s1pr2) from Danio rerio (Zebrafish).